The chain runs to 470 residues: Argininosuccinate lyase (470 aa).

It belongs to the lyase 1 family. Argininosuccinate lyase subfamily.

Its subcellular location is the cytoplasm. The catalysed reaction is 2-(N(omega)-L-arginino)succinate = fumarate + L-arginine. It functions in the pathway amino-acid biosynthesis; L-arginine biosynthesis; L-arginine from L-ornithine and carbamoyl phosphate: step 3/3. The polypeptide is Argininosuccinate lyase (Mycobacterium marinum (strain ATCC BAA-535 / M)).